The sequence spans 188 residues: MTIKSDKWIRRMAQETGMIEPFEPGQVRQSNGQKIVSYGTSSYGYDIRCADEFKIFTNINSTIVDPKNFDENSFVDVKSDVCIIPPNSFALARTIEYFRIPRNVLTICLGKSTYARCGIIVNVTPFEPEWEGYVTLEFSNTTPLPAKIYAGEGCAQVLFFESDEVCEVSYKDRGGKYQGQHGVTLPKA.

Residues 111–116, 135–137, Gln156, Tyr170, and Gln180 contribute to the dCTP site; these read KSTYAR and TLE. The Proton donor/acceptor role is filled by Glu137.

The protein belongs to the dCTP deaminase family. In terms of assembly, homotrimer.

It carries out the reaction dCTP + H2O + H(+) = dUTP + NH4(+). Its pathway is pyrimidine metabolism; dUMP biosynthesis; dUMP from dCTP (dUTP route): step 1/2. Its function is as follows. Catalyzes the deamination of dCTP to dUTP. The sequence is that of dCTP deaminase from Herminiimonas arsenicoxydans.